The primary structure comprises 708 residues: RUN and FYVE domain-containing protein 1 (708 aa).

Positions 1–17 are enriched in basic and acidic residues; sequence MADREGGCAAGRGRELE. Residues 1–57 are disordered; it reads MADREGGCAAGRGRELEPELEPGPGPGSALEPGEEFEIVDRSQLPGPGDLRSATRPR. One can recognise an RUN domain in the interval 139-271; the sequence is DADHAPLQQF…LDANLCLKGE (133 aa). Residues 321–374 are a coiled coil; it reads TVGDLQTKIDGLEKTNSKLQEELSAATDRICSLQEEQQQLREQNELIRERSEKS. 2 positions are modified to phosphotyrosine: tyrosine 389 and tyrosine 400. The stretch at 405-617 forms a coiled coil; it reads KQLKEEKKVR…QALQEMGLHL (213 aa). Positions 493 to 522 are disordered; it reads QVMSSMKQMEERLQHSERARQGAEERSHKL. The segment covering 500–522 has biased composition (basic and acidic residues); it reads QMEERLQHSERARQGAEERSHKL. The interval 615 to 625 is interaction with RAB4; it reads LHLSQSKLKME. Serine 620 carries the post-translational modification Phosphoserine. The FYVE-type zinc-finger motif lies at 642 to 700; the sequence is DDEATHCRQCEKEFSISRRKHHCRNCGHIFCNTCSSNELALPSYPKPVRVCDSCHTLLL. The Zn(2+) site is built by cysteine 648, cysteine 651, cysteine 664, cysteine 667, cysteine 672, cysteine 675, cysteine 692, and cysteine 695.

Self-assembles through coiled coil domains to drive ELVA (endo-lysosomal vesicular assembly) formation. Interacts with BMX. May interact with SSB. Interacts with RAB4 and RAB5 that have been activated by GTP-binding. Interacts WITH RAB14 and RAB4B (GTP-bound form); the interactions allow endosomal tethering and fusion. Interacts with ARL8B (GTP-bound form); the interaction is required for RUFY1 endosomal location and promotes interaction with RAB14. In terms of processing, phosphorylation on Tyr-389 and/or Tyr-400 is required for interaction with BMX and endosomal targeting. As to expression, broadly expressed, with highest levels in lung, testis, kidney and brain.

The protein resides in the early endosome membrane. Functionally, activating adapter involved in cargo sorting from early/recycling endosomes. Regulates retrieval of proteins from endosomes to the trans-Golgi network through interaction with the dynein-dynactin complex. Dual effector of RAB4B and RAB14, mediates a cooperative interaction allowing endosomal tethering and fusion. Binds phospholipid vesicles containing phosphatidylinositol 3-phosphate and participates in early endosomal trafficking. In oocytes, self-assembles to form a protein matrix which hold together endolysosomes, autophagosomes and proteasomes and generate non-membrane-bound compartments called endo-lysosomal vesicular assemblies (ELVAs). In immature oocytes, ELVAs sequester ubiquitinated protein aggregates and degrade them upon oocyte maturation. The protein is RUN and FYVE domain-containing protein 1 of Homo sapiens (Human).